The following is an 877-amino-acid chain: Leucine--tRNA ligase (877 aa).

The 'HIGH' region motif lies at 43–53; the sequence is PYPSGRIHMGH. The 'KMSKS' region motif lies at 628 to 632; sequence KMSKS. K631 provides a ligand contact to ATP.

Belongs to the class-I aminoacyl-tRNA synthetase family.

Its subcellular location is the cytoplasm. It carries out the reaction tRNA(Leu) + L-leucine + ATP = L-leucyl-tRNA(Leu) + AMP + diphosphate. In Brucella abortus biovar 1 (strain 9-941), this protein is Leucine--tRNA ligase.